Here is a 566-residue protein sequence, read N- to C-terminus: Cyclin G (566 aa).

Positions 285–368 (MWYELPSDVL…VIANKLGVQM (84 aa)) constitute a Cyclin N-terminal domain.

It belongs to the cyclin family. Cyclin G subfamily. Interacts with corto. Interacts with the cyclin-dependent kinases Cdk2 and Cdk4. Interacts with Brca2 and Rad9. Interacts with polycomb protein Asx. Interacts with protein phosphatase 2A subunit wdb.

The protein localises to the chromosome. Its function is as follows. Cyclin with roles in multiple processes including transcription, meiotic recombination repair, cell cycle regulation, and promotion of normal growth and metabolism. Binds to the promoter region of the homeobox gene Abd-B and is involved in maintaining Abd-B expression in the pupal epithelium. Involved in the transcriptional repression of the homeotic genes Scr and Ubx. Plays a role in meiotic recombination repair of DNA double-strand breaks which ensures efficient translation of grk and promotes grk activity in the oocyte, leading to oocyte dorso-ventral axis formation following secretion of grk from the oocyte and its binding to Egfr in the directly overlying follicle cells. Negatively regulates the binding of serine/threonine-protein kinase Akt1 to the protein phosphatase 2A subunit wdb, promoting normal growth and metabolism. Required for the formation of bilateral symmetry. Negatively regulates cell cycle progression by preventing G1 to S transition and retarding S-phase progression. In Drosophila melanogaster (Fruit fly), this protein is Cyclin G.